Reading from the N-terminus, the 351-residue chain is MSENGDCEHQTSSGFPSIEQMLASSPGKTPISLLQEYGTRVGKTPVYDLLKAEGQAHQPNFTFRVSVGDINCTGQGPSKKAAKHKAAEVALSLLKEGEMFGVMCEENSVVLSVEQPAELKEVADVSPPPTTRNHTIEMKPPLSAQQSECNPVGALQELVVQKGWRLPEYTVTQESGPAHRKEFTMTCRVERFLEIGSGTSKKLAKRNAAAKMLLQIHQVPAEHRESGETEPEEDQFSVGKLDGSRSRGTACTWDSLRNSSGEKILHLRSNPLTILSSGFCSLLQDLSEEQSFQISYLDIDERSLSGLCQCLVELSTQPTTVCHGSATTRDAARANAAHNALQYLKIMAGGK.

The segment at methionine 1–leucine 22 is disordered. DRBM domains lie at threonine 29–glutamate 96 and asparagine 150–glutamine 218. The interval alanine 221–glycine 243 is disordered. The 69-residue stretch at glycine 278–isoleucine 346 folds into the DRBM 3 domain.

This sequence belongs to the TARBP2 family. In terms of assembly, self-associates. Component of the RISC loading complex (RLC), or micro-RNA (miRNA) loading complex (miRLC), which is composed of dicer1, ago2 and tarbp2. Note that the trimeric RLC/miRLC is also referred to as RISC.

It localises to the cytoplasm. In terms of biological role, required for formation of the RNA induced silencing complex (RISC). Component of the RISC loading complex (RLC), also known as the micro-RNA (miRNA) loading complex (miRLC), which is composed of dicer1, ago2 and tarbp2. Within the RLC/miRLC, dicer1 and tarbp2 are required to process precursor miRNAs (pre-miRNAs) to mature miRNAs and then load them onto ago2. ago2 bound to the mature miRNA constitutes the minimal RISC and may subsequently dissociate from dicer1 and tarbp2. May also play a role in the production of short interfering RNAs (siRNAs) from double-stranded RNA (dsRNA) by dicer1. In Xenopus laevis (African clawed frog), this protein is RISC-loading complex subunit tarbp2 (tarbp2).